Here is a 902-residue protein sequence, read N- to C-terminus: Nuclear factor of activated T-cells, cytoplasmic 4 (902 aa).

Disordered regions lie at residues 16–180 and 208–369; these read VFGE…SSWS and RFGL…GGSR. Positions 50–81 are enriched in pro residues; sequence EPPPYGAAPIGIPRPPPPRPGMHSPPPRPAPS. The segment covering 96-109 has biased composition (gly residues); sequence GGPGGGAGGAGGGR. Positions 114–119 are calcineurin-binding; sequence PSIRIT. The span at 151-165 shows a compositional bias: gly residues; the sequence is GFGGYREAGGQGGGA. Positions 166-180 are enriched in low complexity; the sequence is FFSPSPGSSSLSSWS. Phosphoserine; by MAPK7 and MAPK14 is present on residues S168 and S170. Residues S213 and S217 each carry the phosphoserine; by MAPK8 and MAPK9 modification. The SP 1 repeat unit spans residues 213–229; that stretch reads SPLPSPRASPRPWTPED. The tract at residues 213–293 is 2 approximate SP repeats; sequence SPLPSPRASP…LSRRGSLGEE (81 aa). Pro residues-rich tracts occupy residues 215-227 and 254-263; these read LPSP…PWTP and GPTPASPRPA. A Nuclear localization signal motif is present at residues 268-270; that stretch reads KRR. The span at 272–288 shows a compositional bias: low complexity; that stretch reads SSSGTPSSASPALSRRG. The stretch at 277-293 is one SP 2; approximate repeat; the sequence is PSSASPALSRRGSLGEE. S289 and S344 each carry phosphoserine; by RPS6KA3. The 182-residue stretch at 401–582 folds into the RHD domain; sequence SALPPLDWPL…VPIECSQRSA (182 aa). The DNA-binding element occupies 430-437; it reads RAHYETEG. In terms of domain architecture, IPT/TIG spans 586–683; it reads PQVEAYSPSA…KRSPTQSFRF (98 aa). Residues 672–674 carry the Nuclear localization signal motif; that stretch reads RRK. Residue K689 forms a Glycyl lysine isopeptide (Lys-Gly) (interchain with G-Cter in SUMO2) linkage. The tract at residues 791–870 is disordered; sequence PYGGRGSSFS…GGYSSGFRDS (80 aa). The span at 805–824 shows a compositional bias: pro residues; the sequence is FSPPAPFRPPPLPASPPLEG.

Member of the multicomponent NFATC transcription complex that consists of at least two components, a pre-existing cytoplasmic component NFATC2 and an inducible nuclear component NFATC1. Other NFAT proteins, such as NFATC3, or members of the activating protein-1 (AP-1) family and MAF can also bind the complex. NFAT proteins can bind DNA as monomers or dimers. Component of a promoter-binding complex composed of STAT3, NFATC3 and NFATC4; complex formation is enhanced by calcineurin. Interacts with CREBBP; this interaction potentiates transcription activation. Interacts with MAPK8/JNK1 and MAPK9/JNK2. Interacts with GATA4 (via the second Zn finger). Interacts (via N-terminus) with IRAK1 (via C-terminus). Interacts with RPS6KA3. Interacts with HOMER1, HOMER2 and HOMER3; this interaction competes with calcineurin/PPP3CA-binding and hence prevents NFATC4 dephosphorylation and activation. Interacts with ESR1 and ESR2; this interaction decreases NFATC4 transcriptional activity. Interacts with MTOR and MAPK7/ERK5. Interacts with TRIM17; this interaction prevents NFATC3 nuclear localization. Interacts with TCF25 (via C-terminus); the interaction leads to suppression of NFATC4 transcription factor activity and is reduced following stimulation with angiotensin-2. Post-translationally, phosphorylated by NFATC-kinases; dephosphorylated by calcineurin/PPP3CA. Phosphorylated on Ser-168 and Ser-170 by MTOR, IRAK1, MAPK7/ERK5 and MAPK14/p38, on Ser-213 and Ser-217 by MAPK8/JNK1 and MAPK9/JNK2, and on Ser-289 and Ser-344 by RPS6KA3. Phosphorylated by GSK3B. Phosphorylation by GSK3B markedly increases NFATC4 ubiquitination. Phosphorylation at Ser-168 and Ser-170 is stimulated by UV irradiation. Phosphorylation determines subcellular location: the hyperphosphorylated protein is cytosolic, while the dephosphorylated form is targeted to the nucleus. In terms of processing, ubiquitinated, leading to degradation by the proteasome. Ubiquitination may be stimulated by GSK3B-dependent phosphorylation. Polyubiquitin linkage mainly occurs through 'Lys-48'. As to expression, widely expressed, with high levels in placenta, lung, kidney, testis and ovary. Weakly expressed in spleen and thymus. In the hippocampus, expressed in the granular layer of the dentate gyrus, in the pyramidal neurons of CA3 region, and in the hippocampal fissure. Expressed in the heart (at protein level).

It localises to the cytoplasm. It is found in the nucleus. Its activity is regulated as follows. Transcriptional activity may be repressed by ESR1 and ESR2. Ca(2+)-regulated transcription factor that is involved in several processes, including the development and function of the immune, cardiovascular, musculoskeletal, and nervous systems. Involved in T-cell activation, stimulating the transcription of cytokine genes, including that of IL2 and IL4. Along with NFATC3, involved in embryonic heart development. Following JAK/STAT signaling activation and as part of a complex with NFATC3 and STAT3, binds to the alpha-beta E4 promoter region of CRYAB and activates transcription in cardiomyocytes. Involved in mitochondrial energy metabolism required for cardiac morphogenesis and function. Transactivates many genes involved in the cardiovascular system, including AGTR2, NPPB/BNP (in synergy with GATA4), NPPA/ANP/ANF and MYH7/beta-MHC. Involved in the regulation of adult hippocampal neurogenesis. Involved in BDNF-driven pro-survival signaling in hippocampal adult-born neurons. Involved in the formation of long-term spatial memory and long-term potentiation. In cochlear nucleus neurons, may play a role in deafferentation-induced apoptosis during the developmental critical period, when auditory neurons depend on afferent input for survival. Binds to and activates the BACE1/Beta-secretase 1 promoter, hence may regulate the proteolytic processing of the amyloid precursor protein (APP). Plays a role in adipocyte differentiation. May be involved in myoblast differentiation into myotubes. Binds the consensus DNA sequence 5'-GGAAAAT-3'. In the presence of CREBBP, activates TNF transcription. Binds to PPARG gene promoter and regulates its activity. Binds to PPARG and REG3G gene promoters. In Homo sapiens (Human), this protein is Nuclear factor of activated T-cells, cytoplasmic 4 (NFATC4).